A 290-amino-acid chain; its full sequence is 4-hydroxy-3-methylbut-2-enyl diphosphate reductase (290 aa).

Cysteine 12 is a binding site for [4Fe-4S] cluster. 2 residues coordinate (2E)-4-hydroxy-3-methylbut-2-enyl diphosphate: histidine 50 and histidine 83. The dimethylallyl diphosphate site is built by histidine 50 and histidine 83. Residues histidine 50 and histidine 83 each coordinate isopentenyl diphosphate. Cysteine 105 provides a ligand contact to [4Fe-4S] cluster. Histidine 133 lines the (2E)-4-hydroxy-3-methylbut-2-enyl diphosphate pocket. Histidine 133 lines the dimethylallyl diphosphate pocket. Residue histidine 133 participates in isopentenyl diphosphate binding. Glutamate 135 serves as the catalytic Proton donor. (2E)-4-hydroxy-3-methylbut-2-enyl diphosphate is bound at residue threonine 173. Residue cysteine 202 coordinates [4Fe-4S] cluster. Residues serine 230, asparagine 232, and serine 274 each contribute to the (2E)-4-hydroxy-3-methylbut-2-enyl diphosphate site. Dimethylallyl diphosphate-binding residues include serine 230, asparagine 232, and serine 274. Isopentenyl diphosphate-binding residues include serine 230, asparagine 232, and serine 274.

The protein belongs to the IspH family. It depends on [4Fe-4S] cluster as a cofactor.

The catalysed reaction is isopentenyl diphosphate + 2 oxidized [2Fe-2S]-[ferredoxin] + H2O = (2E)-4-hydroxy-3-methylbut-2-enyl diphosphate + 2 reduced [2Fe-2S]-[ferredoxin] + 2 H(+). It carries out the reaction dimethylallyl diphosphate + 2 oxidized [2Fe-2S]-[ferredoxin] + H2O = (2E)-4-hydroxy-3-methylbut-2-enyl diphosphate + 2 reduced [2Fe-2S]-[ferredoxin] + 2 H(+). Its pathway is isoprenoid biosynthesis; dimethylallyl diphosphate biosynthesis; dimethylallyl diphosphate from (2E)-4-hydroxy-3-methylbutenyl diphosphate: step 1/1. The protein operates within isoprenoid biosynthesis; isopentenyl diphosphate biosynthesis via DXP pathway; isopentenyl diphosphate from 1-deoxy-D-xylulose 5-phosphate: step 6/6. Functionally, catalyzes the conversion of 1-hydroxy-2-methyl-2-(E)-butenyl 4-diphosphate (HMBPP) into a mixture of isopentenyl diphosphate (IPP) and dimethylallyl diphosphate (DMAPP). Acts in the terminal step of the DOXP/MEP pathway for isoprenoid precursor biosynthesis. The sequence is that of 4-hydroxy-3-methylbut-2-enyl diphosphate reductase from Nitratidesulfovibrio vulgaris (strain ATCC 29579 / DSM 644 / CCUG 34227 / NCIMB 8303 / VKM B-1760 / Hildenborough) (Desulfovibrio vulgaris).